Consider the following 344-residue polypeptide: Oxygen sensor histidine kinase NreB (344 aa).

C58, C61, C73, and C76 together coordinate [4Fe-4S] cluster. The 193-residue stretch at 152 to 344 folds into the Histidine kinase domain; the sequence is RISRELHDSV…GTNVTLNIPI (193 aa). At H158 the chain carries Phosphohistidine; by autocatalysis.

It depends on [4Fe-4S] cluster as a cofactor. Post-translationally, autophosphorylated.

The protein localises to the cytoplasm. The catalysed reaction is ATP + protein L-histidine = ADP + protein N-phospho-L-histidine.. Its function is as follows. Member of the two-component regulatory system NreB/NreC involved in the control of dissimilatory nitrate/nitrite reduction in response to oxygen. NreB functions as a direct oxygen sensor histidine kinase which is autophosphorylated, in the absence of oxygen, probably at the conserved histidine residue, and transfers its phosphate group probably to a conserved aspartate residue of NreC. NreB/NreC activates the expression of the nitrate (narGHJI) and nitrite (nir) reductase operons, as well as the putative nitrate transporter gene narT. The protein is Oxygen sensor histidine kinase NreB (nreB) of Staphylococcus aureus (strain JH1).